A 394-amino-acid chain; its full sequence is S-adenosylmethionine synthase (394 aa).

Position 18 (H18) interacts with ATP. Mg(2+) is bound at residue D20. E46 provides a ligand contact to K(+). 2 residues coordinate L-methionine: E59 and Q104. The segment at 104–114 is flexible loop; it reads QSPDIAQGVDA. Residues 174-176, 240-241, D249, 255-256, A272, and K276 contribute to the ATP site; these read DCK, KF, and RK. Residue D249 participates in L-methionine binding. K280 serves as a coordination point for L-methionine.

The protein belongs to the AdoMet synthase family. As to quaternary structure, homotetramer; dimer of dimers. Mg(2+) serves as cofactor. The cofactor is K(+).

Its subcellular location is the cytoplasm. The enzyme catalyses L-methionine + ATP + H2O = S-adenosyl-L-methionine + phosphate + diphosphate. Its pathway is amino-acid biosynthesis; S-adenosyl-L-methionine biosynthesis; S-adenosyl-L-methionine from L-methionine: step 1/1. Catalyzes the formation of S-adenosylmethionine (AdoMet) from methionine and ATP. The overall synthetic reaction is composed of two sequential steps, AdoMet formation and the subsequent tripolyphosphate hydrolysis which occurs prior to release of AdoMet from the enzyme. The polypeptide is S-adenosylmethionine synthase (Akkermansia muciniphila (strain ATCC BAA-835 / DSM 22959 / JCM 33894 / BCRC 81048 / CCUG 64013 / CIP 107961 / Muc)).